The following is a 337-amino-acid chain: GTP 3',8-cyclase (337 aa).

Residues 1–226 (MNRVDYLRIS…REKIRQKWGL (226 aa)) enclose the Radical SAM core domain. Arg-8 contributes to the GTP binding site. [4Fe-4S] cluster contacts are provided by Cys-15 and Cys-19. Tyr-21 serves as a coordination point for S-adenosyl-L-methionine. Cys-22 contributes to the [4Fe-4S] cluster binding site. Arg-60 contacts GTP. Gly-64 lines the S-adenosyl-L-methionine pocket. A GTP-binding site is contributed by Thr-91. Residue Ser-115 coordinates S-adenosyl-L-methionine. Position 155 (Lys-155) interacts with GTP. Residue Met-189 participates in S-adenosyl-L-methionine binding. 2 residues coordinate [4Fe-4S] cluster: Cys-260 and Cys-263. GTP is bound at residue 265 to 267 (RMR). Residue Cys-277 coordinates [4Fe-4S] cluster.

Belongs to the radical SAM superfamily. MoaA family. Monomer and homodimer. The cofactor is [4Fe-4S] cluster.

It catalyses the reaction GTP + AH2 + S-adenosyl-L-methionine = (8S)-3',8-cyclo-7,8-dihydroguanosine 5'-triphosphate + 5'-deoxyadenosine + L-methionine + A + H(+). Its pathway is cofactor biosynthesis; molybdopterin biosynthesis. Functionally, catalyzes the cyclization of GTP to (8S)-3',8-cyclo-7,8-dihydroguanosine 5'-triphosphate. In Crocosphaera subtropica (strain ATCC 51142 / BH68) (Cyanothece sp. (strain ATCC 51142)), this protein is GTP 3',8-cyclase.